A 155-amino-acid polypeptide reads, in one-letter code: Ribosome maturation factor RimP (155 aa).

The protein belongs to the RimP family.

Its subcellular location is the cytoplasm. Required for maturation of 30S ribosomal subunits. This chain is Ribosome maturation factor RimP, found in Exiguobacterium sibiricum (strain DSM 17290 / CCUG 55495 / CIP 109462 / JCM 13490 / 255-15).